Consider the following 436-residue polypeptide: 3-ketoacyl-CoA thiolase (436 aa).

Cys-99 functions as the Acyl-thioester intermediate in the catalytic mechanism. Residues His-392 and Cys-422 each act as proton acceptor in the active site.

The protein belongs to the thiolase-like superfamily. Thiolase family. In terms of assembly, heterotetramer of two alpha chains (FadJ) and two beta chains (FadI).

The protein localises to the cytoplasm. The enzyme catalyses an acyl-CoA + acetyl-CoA = a 3-oxoacyl-CoA + CoA. It participates in lipid metabolism; fatty acid beta-oxidation. Functionally, catalyzes the final step of fatty acid oxidation in which acetyl-CoA is released and the CoA ester of a fatty acid two carbons shorter is formed. This Escherichia coli (strain ATCC 8739 / DSM 1576 / NBRC 3972 / NCIMB 8545 / WDCM 00012 / Crooks) protein is 3-ketoacyl-CoA thiolase.